Here is a 742-residue protein sequence, read N- to C-terminus: Synaptic vesicle glycoprotein 2A (742 aa).

Residues Met1 to Asp57 are interaction with SYT1. Over Met1–Tyr169 the chain is Cytoplasmic. A compositionally biased stretch (basic and acidic residues) spans Glu40 to Phe49. The segment at Glu40–Arg145 is disordered. Phosphoserine occurs at positions 80 and 81. Phosphothreonine is present on Thr84. Gly residues predominate over residues Val122 to Gly137. Ser127 bears the Phosphoserine mark. A helical membrane pass occupies residues Phe170–Leu190. Residues Pro191 to Gly205 lie on the Extracellular side of the membrane. Residues Met206 to Ala226 traverse the membrane as a helical segment. Residues Asp227–Gln233 lie on the Cytoplasmic side of the membrane. The helical transmembrane segment at Cys234–Gly254 threads the bilayer. The Extracellular portion of the chain corresponds to Tyr255–Arg262. The chain crosses the membrane as a helical span at residues Leu263–Phe283. Residues Leu284–Ser294 are Cytoplasmic-facing. The helical transmembrane segment at Trp295–Ile315 threads the bilayer. The Extracellular segment spans residues Pro316–Arg334. The chain crosses the membrane as a helical span at residues Val335–Pro355. Residues Glu356–Thr447 are Cytoplasmic-facing. Position 393 is a phosphoserine (Ser393). A helical transmembrane segment spans residues Leu448 to Phe468. The Extracellular segment spans residues Pro469–Tyr598. The residue at position 480 (Tyr480) is a Phosphotyrosine. Asn498, Asn548, and Asn573 each carry an N-linked (GlcNAc...) asparagine glycan. Residues Phe599–Met619 traverse the membrane as a helical segment. At Asp620 to Arg626 the chain is on the cytoplasmic side. The chain crosses the membrane as a helical span at residues Met627–Ser647. The Extracellular segment spans residues Glu648 to Met651. Residues Ile652–Leu672 traverse the membrane as a helical segment. Residues Thr673–Ala685 lie on the Cytoplasmic side of the membrane. A helical membrane pass occupies residues Phe686 to Val708. Topologically, residues Gly709 to Lys712 are extracellular. A helical membrane pass occupies residues Ala713–Leu731. Residues Lys732 to Gln742 lie on the Cytoplasmic side of the membrane.

This sequence belongs to the major facilitator superfamily. Interacts with SYT1/synaptotagmin-1 in a calcium-dependent manner. Binds the adapter protein complex AP-2. In terms of assembly, (Microbial infection) Interacts with C.botulinum neurotoxin type A (BoNT/A, botA). In terms of processing, phosphorylation by CK1 of the N-terminal cytoplasmic domain regulates interaction with SYT1. N-glycosylated. As to expression, expressed in conventional synapses and cone ribbon synapses in the retina (at protein level). Expressed in diaphragm motor nerve terminals (at protein level). Expressed in hippocampus neurons (at protein level).

It is found in the presynapse. Its subcellular location is the cytoplasmic vesicle. It localises to the secretory vesicle. The protein localises to the synaptic vesicle membrane. Functionally, plays a role in the control of regulated secretion in neural and endocrine cells, enhancing selectively low-frequency neurotransmission. Positively regulates vesicle fusion by maintaining the readily releasable pool of secretory vesicles. In terms of biological role, (Microbial infection) Receptor for C.botulinum neurotoxin type A (BoNT/A, botA); the toxin probably binds via extracellular loop 4. (Microbial infection) Possible receptor for C.botulinum neurotoxin type D (BoNT/D, botD); BoNT/D does not bind to extracellular loop 4 as do BoNT/A and BoNT/E. Its function is as follows. (Microbial infection) Receptor for C.botulinum neurotoxin type E (BoNT/E); the toxin probably binds via extracellular loop 4. It probably requires glycosylation of Asn-573. This chain is Synaptic vesicle glycoprotein 2A (Sv2a), found in Mus musculus (Mouse).